The chain runs to 66 residues: Large ribosomal subunit protein uL29 (66 aa).

This sequence belongs to the universal ribosomal protein uL29 family.

The polypeptide is Large ribosomal subunit protein uL29 (Borrelia garinii subsp. bavariensis (strain ATCC BAA-2496 / DSM 23469 / PBi) (Borreliella bavariensis)).